The sequence spans 92 residues: Small ribosomal subunit protein uS19 (92 aa).

The protein belongs to the universal ribosomal protein uS19 family.

Functionally, protein S19 forms a complex with S13 that binds strongly to the 16S ribosomal RNA. This is Small ribosomal subunit protein uS19 from Listeria innocua serovar 6a (strain ATCC BAA-680 / CLIP 11262).